Consider the following 503-residue polypeptide: Aspartyl/glutamyl-tRNA(Asn/Gln) amidotransferase subunit B (503 aa).

This sequence belongs to the GatB/GatE family. GatB subfamily. As to quaternary structure, heterotrimer of A, B and C subunits.

It carries out the reaction L-glutamyl-tRNA(Gln) + L-glutamine + ATP + H2O = L-glutaminyl-tRNA(Gln) + L-glutamate + ADP + phosphate + H(+). The enzyme catalyses L-aspartyl-tRNA(Asn) + L-glutamine + ATP + H2O = L-asparaginyl-tRNA(Asn) + L-glutamate + ADP + phosphate + 2 H(+). Allows the formation of correctly charged Asn-tRNA(Asn) or Gln-tRNA(Gln) through the transamidation of misacylated Asp-tRNA(Asn) or Glu-tRNA(Gln) in organisms which lack either or both of asparaginyl-tRNA or glutaminyl-tRNA synthetases. The reaction takes place in the presence of glutamine and ATP through an activated phospho-Asp-tRNA(Asn) or phospho-Glu-tRNA(Gln). The sequence is that of Aspartyl/glutamyl-tRNA(Asn/Gln) amidotransferase subunit B from Mycobacterium avium (strain 104).